Consider the following 136-residue polypeptide: MAQKPLSTTAAERMNLVAQDEIWKYRLRAESEARQNWPAKWGYLTTSMKELLEGEEEPQTPKPKPELPSHFYVRPVSPMDKHIKILPSPPVPKTTQGFIGWRSGKPALYCLEKYSEVCSCKGAYARELCWPEQGVH.

It localises to the cell projection. Its subcellular location is the cilium. The sequence is that of Ciliary microtubule inner protein 1 (Cimip1) from Mus musculus (Mouse).